Reading from the N-terminus, the 258-residue chain is Mitochondrial distribution and morphology protein 12 (258 aa).

In terms of domain architecture, SMP-LTD spans 1 to 233; that stretch reads MSFDIHWSNL…WPSWIELDFN (233 aa). The tract at residues 238-258 is disordered; it reads EDLQQSKDTPTTANTGTTTTN. Residues 246-258 are compositionally biased toward low complexity; the sequence is TPTTANTGTTTTN.

It belongs to the MDM12 family. In terms of assembly, component of the ER-mitochondria encounter structure (ERMES) or MDM complex, composed of MMM1, MDM10, MDM12 and MDM34. An MMM1 homodimer associates with one molecule of MDM12 on each side in a pairwise head-to-tail manner, and the SMP-LTD domains of MMM1 and MDM12 generate a continuous hydrophobic tunnel for phospholipid trafficking.

The protein localises to the mitochondrion outer membrane. The protein resides in the endoplasmic reticulum membrane. In terms of biological role, component of the ERMES/MDM complex, which serves as a molecular tether to connect the endoplasmic reticulum (ER) and mitochondria. Components of this complex are involved in the control of mitochondrial shape and protein biogenesis, and function in nonvesicular lipid trafficking between the ER and mitochondria. MDM12 is required for the interaction of the ER-resident membrane protein MMM1 and the outer mitochondrial membrane-resident beta-barrel protein MDM10. The MDM12-MMM1 subcomplex functions in the major beta-barrel assembly pathway that is responsible for biogenesis of all mitochondrial outer membrane beta-barrel proteins, and acts in a late step after the SAM complex. The MDM10-MDM12-MMM1 subcomplex further acts in the TOM40-specific pathway after the action of the MDM12-MMM1 complex. Essential for establishing and maintaining the structure of mitochondria and maintenance of mtDNA nucleoids. The polypeptide is Mitochondrial distribution and morphology protein 12 (Zygosaccharomyces rouxii (strain ATCC 2623 / CBS 732 / NBRC 1130 / NCYC 568 / NRRL Y-229)).